We begin with the raw amino-acid sequence, 463 residues long: V-type proton ATPase subunit S1 (463 aa).

An N-terminal signal peptide occupies residues 1-32; sequence MMAATVVSRIRTGTRWAPVLWLLLSLVAVAAA. Residues 33 to 225 constitute a propeptide that is removed on maturation; that stretch reads VAAEQQVPLV…TAVRPSRVAR (193 aa). Residues 33-412 are Lumenal-facing; the sequence is VAAEQQVPLV…EQFSYASDCA (380 aa). Asn164, Asn255, Asn267, Asn290, Asn297, Asn344, Asn351, and Asn399 each carry an N-linked (GlcNAc...) asparagine glycan. A helical membrane pass occupies residues 413–433; that stretch reads GFFSPGIWMGLLTTLFMLFIF. Over 434-463 the chain is Cytoplasmic; it reads TYGLHMILSLKTMDRFDDRKGPTITLTQIV.

This sequence belongs to the vacuolar ATPase subunit S1 family. As to quaternary structure, accessory component of the multisubunit proton-transporting vacuolar (V)-ATPase protein pump. Interacts (via N-terminus) with ATP6AP2 (via N-terminus). Interacts with RNASEK. Interacts with TMEM106B (via C-terminus). In terms of processing, N-glycosylated. Expressed in brain (at protein level).

Its subcellular location is the endoplasmic reticulum membrane. It is found in the endoplasmic reticulum-Golgi intermediate compartment membrane. The protein localises to the cytoplasmic vesicle. The protein resides in the secretory vesicle. It localises to the synaptic vesicle membrane. Its subcellular location is the clathrin-coated vesicle membrane. Its function is as follows. Accessory subunit of the proton-transporting vacuolar (V)-ATPase protein pump, which is required for luminal acidification of secretory vesicles. Guides the V-type ATPase into specialized subcellular compartments, such as neuroendocrine regulated secretory vesicles or the ruffled border of the osteoclast, thereby regulating its activity. Involved in membrane trafficking and Ca(2+)-dependent membrane fusion. May play a role in the assembly of the V-type ATPase complex. In aerobic conditions, involved in intracellular iron homeostasis, thus triggering the activity of Fe(2+) prolyl hydroxylase (PHD) enzymes, and leading to HIF1A hydroxylation and subsequent proteasomal degradation. In islets of Langerhans cells, may regulate the acidification of dense-core secretory granules. The chain is V-type proton ATPase subunit S1 (Atp6ap1) from Rattus norvegicus (Rat).